Reading from the N-terminus, the 360-residue chain is Phosphoserine aminotransferase (360 aa).

Arg42 provides a ligand contact to L-glutamate. Residues 76–77, Trp102, Thr152, Asp171, and Gln194 contribute to the pyridoxal 5'-phosphate site; that span reads AS. Residue Lys195 is modified to N6-(pyridoxal phosphate)lysine. Residue 236–237 coordinates pyridoxal 5'-phosphate; it reads NT.

The protein belongs to the class-V pyridoxal-phosphate-dependent aminotransferase family. SerC subfamily. In terms of assembly, homodimer. Requires pyridoxal 5'-phosphate as cofactor.

It localises to the cytoplasm. The enzyme catalyses O-phospho-L-serine + 2-oxoglutarate = 3-phosphooxypyruvate + L-glutamate. The catalysed reaction is 4-(phosphooxy)-L-threonine + 2-oxoglutarate = (R)-3-hydroxy-2-oxo-4-phosphooxybutanoate + L-glutamate. The protein operates within amino-acid biosynthesis; L-serine biosynthesis; L-serine from 3-phospho-D-glycerate: step 2/3. In terms of biological role, catalyzes the reversible conversion of 3-phosphohydroxypyruvate to phosphoserine and of 3-hydroxy-2-oxo-4-phosphonooxybutanoate to phosphohydroxythreonine. This Geobacillus kaustophilus (strain HTA426) protein is Phosphoserine aminotransferase.